We begin with the raw amino-acid sequence, 612 residues long: uncharacterized protein (612 aa).

The J domain occupies 8–75; sequence ELYLALGLPK…SKKEIYDNFG (68 aa). Residues 445–465 traverse the membrane as a helical segment; it reads AVFWGLVFPITSILGVEQFFL.

It belongs to the DnaJ family.

The protein localises to the membrane. This is an uncharacterized protein from Schizosaccharomyces pombe (strain 972 / ATCC 24843) (Fission yeast).